The primary structure comprises 313 residues: DNA-directed RNA polymerase subunit alpha (313 aa).

Residues 1-226 are alpha N-terminal domain (alpha-NTD); sequence MLEIEKPKIE…EHLQLFVNLN (226 aa). Residues 243 to 313 form an alpha C-terminal domain (alpha-CTD) region; it reads KEKLAEMPIE…MGLSLRKEEE (71 aa).

The protein belongs to the RNA polymerase alpha chain family. Homodimer. The RNAP catalytic core consists of 2 alpha, 1 beta, 1 beta' and 1 omega subunit. When a sigma factor is associated with the core the holoenzyme is formed, which can initiate transcription.

It catalyses the reaction RNA(n) + a ribonucleoside 5'-triphosphate = RNA(n+1) + diphosphate. Its function is as follows. DNA-dependent RNA polymerase catalyzes the transcription of DNA into RNA using the four ribonucleoside triphosphates as substrates. The protein is DNA-directed RNA polymerase subunit alpha of Carboxydothermus hydrogenoformans (strain ATCC BAA-161 / DSM 6008 / Z-2901).